The sequence spans 257 residues: Phosphatidylglycerol--prolipoprotein diacylglyceryl transferase (257 aa).

Transmembrane regions (helical) follow at residues 8–28 (IFGL…ILAY), 48–68 (VFIV…VIFN), 84–104 (EGGL…YLMS), and 109–129 (LNFL…QAIG). Residue Arg-130 participates in a 1,2-diacyl-sn-glycero-3-phospho-(1'-sn-glycerol) binding. 3 helical membrane-spanning segments follow: residues 169–189 (PTFL…LLIT), 196–216 (GSIF…IEGL), and 225–245 (SLRM…ILII).

Belongs to the Lgt family.

The protein resides in the cell membrane. It catalyses the reaction L-cysteinyl-[prolipoprotein] + a 1,2-diacyl-sn-glycero-3-phospho-(1'-sn-glycerol) = an S-1,2-diacyl-sn-glyceryl-L-cysteinyl-[prolipoprotein] + sn-glycerol 1-phosphate + H(+). It participates in protein modification; lipoprotein biosynthesis (diacylglyceryl transfer). Catalyzes the transfer of the diacylglyceryl group from phosphatidylglycerol to the sulfhydryl group of the N-terminal cysteine of a prolipoprotein, the first step in the formation of mature lipoproteins. The polypeptide is Phosphatidylglycerol--prolipoprotein diacylglyceryl transferase (Clostridium novyi (strain NT)).